Here is a 777-residue protein sequence, read N- to C-terminus: CRISPR system single-strand-specific deoxyribonuclease Cas10/Csm1 (subtype III-A) (777 aa).

The region spanning 1–106 is the HD domain; the sequence is MEIDELTALG…VYEADNLASG (106 aa). The 148-residue stretch at 513–660 folds into the GGDEF domain; that stretch reads RRLGVMKGDV…GRNRVFVVGR (148 aa).

Belongs to the CRISPR-associated Cas10/Csm1 family. As to quaternary structure, probably part of the Csm effector complex, that includes Cas10, Csm2, Csm3, Csm4, Csm5 and mature crRNA. Will form a homodimer in solution, interacts with Csm4, which is a tighter, better association than the homodimeric Cas10 and uses the same interface for interaction. It depends on a divalent metal cation as a cofactor.

Its activity is regulated as follows. ssDNase activity is inhibited by EDTA. CRISPR (clustered regularly interspaced short palindromic repeat) is an adaptive immune system that provides protection against mobile genetic elements (viruses, transposable elements and conjugative plasmids). CRISPR clusters contain spacers, sequences complementary to antecedent mobile elements, and target invading nucleic acids. CRISPR clusters are transcribed and processed into CRISPR RNA (crRNA). The type III-A Csm effector complex binds crRNA and acts as a crRNA-guided RNase, DNase and cyclic oligoadenylate synthase; binding of target RNA cognate to the crRNA is required for all activities. In terms of biological role, a single-strand deoxyribonuclease (ssDNase) which digests linear and circular ssDNA; has 5'-3' and 3'-5' exonuclease activity as well as a less efficient endonuclease activity. Has a minimal size requirement; 100 nucleotide ssDNA (nt) is more efficiently digested than 50 or 25 nt ssDNA, while 14 nt ssDNA is not cleaved at all. It has no activity on dsDNA or ssRNA. Functionally, ssDNase activity is stimulated in the ternary Csm effector complex; binding of cognate target RNA activates the ssDNase, as the target RNA is degraded ssDNA activity decreases. Its function is as follows. When associated with the ternary Csm effector complex (the crRNA, Cas proteins and a cognate target ssRNA) synthesizes cyclic oligoadenylates (cOA) from ATP. cOAs are second messengers that stimulate the ssRNase activity of Csm6, inducing an antiviral state important for defense against invading nucleic acids. The sequence is that of CRISPR system single-strand-specific deoxyribonuclease Cas10/Csm1 (subtype III-A) from Thermococcus onnurineus (strain NA1).